Reading from the N-terminus, the 349-residue chain is Myocyte-specific enhancer factor 2B (349 aa).

An MADS-box domain is found at 3–57; sequence RKKIQISRILDQRNRQVTFTKRKFGLMKKAYELSVLCDCDIALIIFNSAQRLFQY. Residues 58–86 constitute a DNA-binding region (mef2-type); that stretch reads ASSDMDRVLLKYTEYSEPHESRTNADILQ. Disordered regions lie at residues 237–317 and 330–349; these read GSFA…DFPR and AEPLRPSASLHRLTPDSWPR.

It belongs to the MEF2 family. As to quaternary structure, heterodimer. Interacts with HDAC9. Interacts with HDAC7. As to expression, highest expression found in embryonic heart and skeletal muscle. Low levels found in adult spleen, lung and testis while no expression is found in adult heart, brain or skeletal muscle.

It is found in the nucleus. Transcriptional activator which binds specifically to the MEF2 element, 5'-YTA[AT](4)TAR-3', found in numerous muscle-specific genes. Activates transcription via this element. May be involved in muscle-specific and/or growth factor-related transcription. In Mus musculus (Mouse), this protein is Myocyte-specific enhancer factor 2B (Mef2b).